The primary structure comprises 267 residues: Hydroxyethylthiazole kinase (267 aa).

Position 49 (M49) interacts with substrate. Residues R124 and T170 each coordinate ATP. G197 contributes to the substrate binding site.

The protein belongs to the Thz kinase family. The cofactor is Mg(2+).

The enzyme catalyses 5-(2-hydroxyethyl)-4-methylthiazole + ATP = 4-methyl-5-(2-phosphooxyethyl)-thiazole + ADP + H(+). It functions in the pathway cofactor biosynthesis; thiamine diphosphate biosynthesis; 4-methyl-5-(2-phosphoethyl)-thiazole from 5-(2-hydroxyethyl)-4-methylthiazole: step 1/1. Catalyzes the phosphorylation of the hydroxyl group of 4-methyl-5-beta-hydroxyethylthiazole (THZ). The sequence is that of Hydroxyethylthiazole kinase from Tolumonas auensis (strain DSM 9187 / NBRC 110442 / TA 4).